A 270-amino-acid chain; its full sequence is Glucosamine-6-phosphate deaminase (270 aa).

The active-site Proton acceptor; for enolization step is the D68. Catalysis depends on D145, which acts as the For ring-opening step. The active-site Proton acceptor; for ring-opening step is the H147. E152 acts as the For ring-opening step in catalysis.

The protein belongs to the glucosamine/galactosamine-6-phosphate isomerase family. NagB subfamily.

It catalyses the reaction alpha-D-glucosamine 6-phosphate + H2O = beta-D-fructose 6-phosphate + NH4(+). The protein operates within amino-sugar metabolism; N-acetylneuraminate degradation; D-fructose 6-phosphate from N-acetylneuraminate: step 5/5. Catalyzes the reversible isomerization-deamination of glucosamine 6-phosphate (GlcN6P) to form fructose 6-phosphate (Fru6P) and ammonium ion. This is Glucosamine-6-phosphate deaminase from Bifidobacterium longum (strain DJO10A).